We begin with the raw amino-acid sequence, 363 residues long: Cytochrome b (363 aa).

4 consecutive transmembrane segments (helical) span residues 24–44, 68–90, 105–125, and 171–191; these read VGFSLGFFIALQIICGVCLAW, FVIRSVHICFTSLLYLLLYIHIF, VWFIGFILFVFIIIIAFIGYV, and LHVLHVLLPFILLIILILHLF. Positions 74 and 88 each coordinate heme b. Positions 175 and 189 each coordinate heme b. H194 is a binding site for a ubiquinone. Helical transmembrane passes span 219 to 239, 287 to 307, 321 to 341, and 342 to 362; these read FYLRDMFLAFSILLCMMYVIF, FLMVILLFSLFLFILNCILWF, LILFYSIWMSGFLALYVVLAY, and PIWMELQYWVLLLFLLIVCRL.

This sequence belongs to the cytochrome b family. In terms of assembly, the main subunits of complex b-c1 are: cytochrome b, cytochrome c1 and the Rieske protein. It depends on heme b as a cofactor.

Its subcellular location is the mitochondrion inner membrane. Its function is as follows. Component of the ubiquinol-cytochrome c reductase complex (complex III or cytochrome b-c1 complex) that is part of the mitochondrial respiratory chain. The b-c1 complex mediates electron transfer from ubiquinol to cytochrome c. Contributes to the generation of a proton gradient across the mitochondrial membrane that is then used for ATP synthesis. The protein is Cytochrome b (MT-CYB) of Trypanosoma brucei brucei.